We begin with the raw amino-acid sequence, 352 residues long: Inhibin beta C chain (352 aa).

An N-terminal signal peptide occupies residues 1-18 (MASSLLLALLFLTPTTVV). A propeptide spanning residues 19–236 (NPKTEGPCPA…VEGKHRVRRR (218 aa)) is cleaved from the precursor. N-linked (GlcNAc...) asparagine glycans are attached at residues Asn-111, Asn-143, Asn-161, and Asn-173. 4 cysteine pairs are disulfide-bonded: Cys-240-Cys-248, Cys-247-Cys-317, Cys-276-Cys-349, and Cys-280-Cys-351.

This sequence belongs to the TGF-beta family. In terms of assembly, homodimeric or heterodimeric through association with alpha and beta subunits, linked by one or more disulfide bonds. Inhibins are heterodimers of one alpha and one beta subunit. Activins are homo- or heterodimers of beta subunits only. Mainly expressed in the adult liver.

The protein resides in the secreted. Inhibins and activins inhibit and activate, respectively, the secretion of follitropin by the pituitary gland. Inhibins/activins are involved in regulating a number of diverse functions such as hypothalamic and pituitary hormone secretion, gonadal hormone secretion, germ cell development and maturation, erythroid differentiation, insulin secretion, nerve cell survival, embryonic axial development or bone growth, depending on their subunit composition. Inhibins appear to oppose the functions of activins. The chain is Inhibin beta C chain (Inhbc) from Mus musculus (Mouse).